The following is a 146-amino-acid chain: Ecotin-like protein 1 (146 aa).

The protein belongs to the protease inhibitor I11 (ecotin) family.

The protein is Ecotin-like protein 1 (ISP1) of Leishmania infantum.